The sequence spans 211 residues: Small ribosomal subunit protein uS4 (211 aa).

The S4 RNA-binding domain occupies R99–E160.

Belongs to the universal ribosomal protein uS4 family. Part of the 30S ribosomal subunit. Contacts protein S5. The interaction surface between S4 and S5 is involved in control of translational fidelity.

Functionally, one of the primary rRNA binding proteins, it binds directly to 16S rRNA where it nucleates assembly of the body of the 30S subunit. In terms of biological role, with S5 and S12 plays an important role in translational accuracy. The protein is Small ribosomal subunit protein uS4 of Petrotoga mobilis (strain DSM 10674 / SJ95).